Here is a 141-residue protein sequence, read N- to C-terminus: Hemoglobin subunit alpha-D (141 aa).

A Globin domain is found at 1-141 (MLTAEDKKLI…VAAVLAEKYR (141 aa)). Heme b contacts are provided by His-58 and His-87.

As to quaternary structure, heterotetramer of two alpha-D chains and two beta chains. In terms of tissue distribution, red blood cells.

In terms of biological role, involved in oxygen transport from the lung to the various peripheral tissues. The protein is Hemoglobin subunit alpha-D (HBAD) of Aythya fuligula (Tufted duck).